Here is a 565-residue protein sequence, read N- to C-terminus: Dihydroxy-acid dehydratase (565 aa).

Cys-50 contributes to the [2Fe-2S] cluster binding site. Asp-82 is a Mg(2+) binding site. Cys-123 contacts [2Fe-2S] cluster. Mg(2+)-binding residues include Asp-124 and Lys-125. Lys-125 is modified (N6-carboxylysine). Cys-195 contributes to the [2Fe-2S] cluster binding site. A Mg(2+)-binding site is contributed by Glu-447. The Proton acceptor role is filled by Ser-473.

The protein belongs to the IlvD/Edd family. Homodimer. [2Fe-2S] cluster is required as a cofactor. It depends on Mg(2+) as a cofactor.

The enzyme catalyses (2R)-2,3-dihydroxy-3-methylbutanoate = 3-methyl-2-oxobutanoate + H2O. It carries out the reaction (2R,3R)-2,3-dihydroxy-3-methylpentanoate = (S)-3-methyl-2-oxopentanoate + H2O. It participates in amino-acid biosynthesis; L-isoleucine biosynthesis; L-isoleucine from 2-oxobutanoate: step 3/4. Its pathway is amino-acid biosynthesis; L-valine biosynthesis; L-valine from pyruvate: step 3/4. In terms of biological role, functions in the biosynthesis of branched-chain amino acids. Catalyzes the dehydration of (2R,3R)-2,3-dihydroxy-3-methylpentanoate (2,3-dihydroxy-3-methylvalerate) into 2-oxo-3-methylpentanoate (2-oxo-3-methylvalerate) and of (2R)-2,3-dihydroxy-3-methylbutanoate (2,3-dihydroxyisovalerate) into 2-oxo-3-methylbutanoate (2-oxoisovalerate), the penultimate precursor to L-isoleucine and L-valine, respectively. This Halorhodospira halophila (strain DSM 244 / SL1) (Ectothiorhodospira halophila (strain DSM 244 / SL1)) protein is Dihydroxy-acid dehydratase.